The following is a 103-amino-acid chain: NADH-quinone oxidoreductase subunit K 1 (103 aa).

A run of 3 helical transmembrane segments spans residues 6–26, 32–52, and 67–87; these read LGHF…GIFL, IIIL…LVAF, and LVLT…VVFF.

It belongs to the complex I subunit 4L family. NDH-1 is composed of 14 different subunits. Subunits NuoA, H, J, K, L, M, N constitute the membrane sector of the complex.

The protein resides in the cell inner membrane. It carries out the reaction a quinone + NADH + 5 H(+)(in) = a quinol + NAD(+) + 4 H(+)(out). NDH-1 shuttles electrons from NADH, via FMN and iron-sulfur (Fe-S) centers, to quinones in the respiratory chain. The immediate electron acceptor for the enzyme in this species is believed to be ubiquinone. Couples the redox reaction to proton translocation (for every two electrons transferred, four hydrogen ions are translocated across the cytoplasmic membrane), and thus conserves the redox energy in a proton gradient. The chain is NADH-quinone oxidoreductase subunit K 1 from Rhodopseudomonas palustris (strain ATCC BAA-98 / CGA009).